Consider the following 601-residue polypeptide: Somatic embryogenesis receptor kinase 5 (601 aa).

Positions 1-24 (MEHGSSRGFIWLILFLDFVSRVTG) are cleaved as a signal peptide. The Extracellular portion of the chain corresponds to 25-215 (KTQVDALIAL…SPSPSPSGTS (191 aa)). N-linked (GlcNAc...) asparagine glycosylation is found at N52, N81, N105, N129, N151, and N184. LRR repeat units lie at residues 71 to 94 (SVTR…AQLP), 95 to 118 (NLQY…GDLM), 119 to 141 (ELVS…LGKL), 143 to 165 (KLRF…LTAL), and 166 to 188 (PLDV…GSFS). Residues 216-236 (AAIVVGVAAGAALLFALAWWL) traverse the membrane as a helical segment. Over 237 to 601 (RRKLQGHFLD…IENDYPSGPR (365 aa)) the chain is Cytoplasmic. Residue T272 is modified to Phosphothreonine. Positions 275 to 572 (FSKRNVLGKG…KEEMPIHDFN (298 aa)) constitute a Protein kinase domain. 281–289 (LGKGRFGIL) is an ATP binding site. A Phosphothreonine modification is found at T298. An ATP-binding site is contributed by K303. Phosphoserine is present on residues S356 and S359. D402 acts as the Proton acceptor in catalysis. Phosphothreonine occurs at positions 435, 436, and 441. The residue at position 449 (Y449) is a Phosphotyrosine. S451 is subject to Phosphoserine. Phosphothreonine is present on T452. Residues S456 and S506 each carry the phosphoserine modification. T532 bears the Phosphothreonine mark.

This sequence belongs to the protein kinase superfamily. Ser/Thr protein kinase family. As to quaternary structure, interacts with TMK4/BARK1. Autophosphorylated.

Its subcellular location is the cell membrane. The catalysed reaction is L-seryl-[protein] + ATP = O-phospho-L-seryl-[protein] + ADP + H(+). It catalyses the reaction L-threonyl-[protein] + ATP = O-phospho-L-threonyl-[protein] + ADP + H(+). Functionally, serine/threonine-kinase of unknown function. The chain is Somatic embryogenesis receptor kinase 5 (SERK5) from Arabidopsis thaliana (Mouse-ear cress).